The following is a 440-amino-acid chain: Adenylosuccinate synthetase (440 aa).

Residues 11-17 (GDEGKGG) and 39-41 (GHT) contribute to the GTP site. The Proton acceptor role is filled by Asp-12. Mg(2+)-binding residues include Asp-12 and Gly-39. Residues 12 to 15 (DEGK), 37 to 40 (NAGH), Thr-127, Arg-141, Gln-230, Thr-245, and Arg-311 each bind IMP. The Proton donor role is filled by His-40. Residue 307–313 (TVTGRPR) coordinates substrate. GTP is bound by residues Arg-313, 339–341 (HLD), and 424–426 (GVG).

The protein belongs to the adenylosuccinate synthetase family. As to quaternary structure, homodimer. It depends on Mg(2+) as a cofactor.

The protein localises to the cytoplasm. The enzyme catalyses IMP + L-aspartate + GTP = N(6)-(1,2-dicarboxyethyl)-AMP + GDP + phosphate + 2 H(+). The protein operates within purine metabolism; AMP biosynthesis via de novo pathway; AMP from IMP: step 1/2. In terms of biological role, plays an important role in the de novo pathway of purine nucleotide biosynthesis. Catalyzes the first committed step in the biosynthesis of AMP from IMP. The protein is Adenylosuccinate synthetase of Halobacterium salinarum (strain ATCC 29341 / DSM 671 / R1).